Here is a 405-residue protein sequence, read N- to C-terminus: Adenylosuccinate synthetase (405 aa).

Residues 12 to 18 and 40 to 42 contribute to the GTP site; these read GDEGKGK and GHT. Residue D13 is the Proton acceptor of the active site. Mg(2+) is bound by residues D13 and G40. IMP-binding positions include 13–16, 38–41, T121, R135, Q213, T228, and R297; these read DEGK and NAGH. The active-site Proton donor is the H41. 293–299 is a binding site for substrate; that stretch reads TTTGRAR. GTP contacts are provided by residues R299, 325–327, and 390–392; these read KMD and SAG.

It belongs to the adenylosuccinate synthetase family. In terms of assembly, homodimer. Mg(2+) serves as cofactor.

The protein resides in the cytoplasm. The enzyme catalyses IMP + L-aspartate + GTP = N(6)-(1,2-dicarboxyethyl)-AMP + GDP + phosphate + 2 H(+). The protein operates within purine metabolism; AMP biosynthesis via de novo pathway; AMP from IMP: step 1/2. Its function is as follows. Plays an important role in the de novo pathway of purine nucleotide biosynthesis. Catalyzes the first committed step in the biosynthesis of AMP from IMP. This chain is Adenylosuccinate synthetase, found in Deinococcus deserti (strain DSM 17065 / CIP 109153 / LMG 22923 / VCD115).